Reading from the N-terminus, the 353-residue chain is Photosystem II protein D1 (353 aa).

Thr-2 is subject to N-acetylthreonine. Residue Thr-2 is modified to Phosphothreonine. 3 consecutive transmembrane segments (helical) span residues 29 to 46 (YIGW…TATS), 118 to 133 (HFLL…EWEL), and 142 to 156 (WIAV…AATA). Chlorophyll a is bound at residue His-118. Residue Tyr-126 coordinates pheophytin a. Residues Asp-170 and Glu-189 each coordinate [CaMn4O5] cluster. Residues 197-218 (FHMLGVAGVFGGSLFSAMHGSL) form a helical membrane-spanning segment. Chlorophyll a is bound at residue His-198. A quinone-binding positions include His-215 and 264-265 (SF). His-215 provides a ligand contact to Fe cation. Residue His-272 participates in Fe cation binding. The helical transmembrane segment at 274–288 (FLAAWPVVGIWFTSL) threads the bilayer. Positions 332, 333, 342, and 344 each coordinate [CaMn4O5] cluster. A propeptide spanning residues 345-353 (AIDAPSVNG) is cleaved from the precursor.

This sequence belongs to the reaction center PufL/M/PsbA/D family. In terms of assembly, PSII is composed of 1 copy each of membrane proteins PsbA, PsbB, PsbC, PsbD, PsbE, PsbF, PsbH, PsbI, PsbJ, PsbK, PsbL, PsbM, PsbT, PsbX, PsbY, PsbZ, Psb30/Ycf12, at least 3 peripheral proteins of the oxygen-evolving complex and a large number of cofactors. It forms dimeric complexes. The D1/D2 heterodimer binds P680, chlorophylls that are the primary electron donor of PSII, and subsequent electron acceptors. It shares a non-heme iron and each subunit binds pheophytin, quinone, additional chlorophylls, carotenoids and lipids. D1 provides most of the ligands for the Mn4-Ca-O5 cluster of the oxygen-evolving complex (OEC). There is also a Cl(-1) ion associated with D1 and D2, which is required for oxygen evolution. The PSII complex binds additional chlorophylls, carotenoids and specific lipids. is required as a cofactor. In terms of processing, tyr-161 forms a radical intermediate that is referred to as redox-active TyrZ, YZ or Y-Z. Post-translationally, C-terminally processed by CTPA; processing is essential to allow assembly of the oxygen-evolving complex and thus photosynthetic growth.

The protein resides in the plastid. It is found in the chloroplast thylakoid membrane. The enzyme catalyses 2 a plastoquinone + 4 hnu + 2 H2O = 2 a plastoquinol + O2. Its function is as follows. Photosystem II (PSII) is a light-driven water:plastoquinone oxidoreductase that uses light energy to abstract electrons from H(2)O, generating O(2) and a proton gradient subsequently used for ATP formation. It consists of a core antenna complex that captures photons, and an electron transfer chain that converts photonic excitation into a charge separation. The D1/D2 (PsbA/PsbD) reaction center heterodimer binds P680, the primary electron donor of PSII as well as several subsequent electron acceptors. The chain is Photosystem II protein D1 from Coffea arabica (Arabian coffee).